The following is a 720-amino-acid chain: Exocyst complex component 7 (720 aa).

Coiled coils occupy residues 5 to 34 (EDAS…SLEK) and 63 to 83 (VHKQ…TLSN). The residue at position 133 (S133) is a Phosphoserine. A disordered region spans residues 249–268 (SPAVQTKRKETPTKKAPKRP).

The protein belongs to the EXO70 family.

The protein localises to the cytoplasm. It localises to the cytosol. Its subcellular location is the cell membrane. The protein resides in the midbody. It is found in the midbody ring. Its function is as follows. Component of the exocyst complex involved in the docking of exocytic vesicles with fusion sites on the plasma membrane. It is required for neuron survival and plays an essential role in telencephalon development. The protein is Exocyst complex component 7 (exoc7) of Danio rerio (Zebrafish).